Here is a 200-residue protein sequence, read N- to C-terminus: Lipopolysaccharide core heptose(II)-phosphate phosphatase (200 aa).

The N-terminal stretch at M1–A25 is a signal peptide.

This sequence belongs to the phosphoglycerate mutase family. Ais subfamily.

The protein resides in the periplasm. Its pathway is bacterial outer membrane biogenesis; lipopolysaccharide metabolism. Functionally, catalyzes the dephosphorylation of heptose(II) of the outer membrane lipopolysaccharide core. In Escherichia coli O6:K15:H31 (strain 536 / UPEC), this protein is Lipopolysaccharide core heptose(II)-phosphate phosphatase.